A 588-amino-acid polypeptide reads, in one-letter code: Succinate dehydrogenase flavoprotein subunit (588 aa).

Residues 14–19, 37–52, and D221 each bind FAD; these read GAGGAG and SKVF…AQGG. The residue at position 45 (H45) is a Tele-8alpha-FAD histidine. Positions 242 and 254 each coordinate substrate. At K267 the chain carries N6-acetyllysine. Residue R286 is the Proton acceptor of the active site. A substrate-binding site is contributed by H354. E388 contacts FAD. Residue R399 participates in substrate binding. FAD is bound at residue 404–405; the sequence is SL.

This sequence belongs to the FAD-dependent oxidoreductase 2 family. FRD/SDH subfamily. In terms of assembly, part of an enzyme complex containing four subunits: a flavoprotein, an iron-sulfur, cytochrome b-556, and a hydrophobic anchor protein. The complex forms trimers. FAD serves as cofactor.

The protein localises to the cell inner membrane. The enzyme catalyses a quinone + succinate = fumarate + a quinol. It functions in the pathway carbohydrate metabolism; tricarboxylic acid cycle; fumarate from succinate (bacterial route): step 1/1. Two distinct, membrane-bound, FAD-containing enzymes are responsible for the catalysis of fumarate and succinate interconversion; the fumarate reductase is used in anaerobic growth, and the succinate dehydrogenase is used in aerobic growth. The polypeptide is Succinate dehydrogenase flavoprotein subunit (sdhA) (Escherichia coli O157:H7).